A 177-amino-acid polypeptide reads, in one-letter code: R-phycoerythrin beta chain (177 aa).

The phycourobilin site is built by Cys50 and Cys61. N4-methylasparagine is present on Asn72. (2R,3E)-phycoerythrobilin contacts are provided by Cys82 and Cys158.

This sequence belongs to the phycobiliprotein family. As to quaternary structure, heterodimer of an alpha and a beta chain. Post-translationally, contains two covalently linked phycoerythrobilin chromophores and one covalently linked phycourobilin chromophore.

Its subcellular location is the plastid. It localises to the chloroplast thylakoid membrane. In terms of biological role, light-harvesting photosynthetic bile pigment-protein from the phycobiliprotein complex. The polypeptide is R-phycoerythrin beta chain (cpeB) (Porphyra purpurea (Red seaweed)).